The primary structure comprises 448 residues: MMDVNSSGRPDLYGHLRSLILPEVGRRLQDLSPDGGAHSVVSSWMPHLLSGFPEVTASPAPTWDAPPDNVSGCGEQINYGRVEKVVIGSILTLITLLTIAGNCLVVISVCFVKKLRQPSNYLIVSLALADLSVAVAVMPFVSVTDLIGGKWIFGHFFCNVFIAMDVMCCTASIMTLCVISIDRYLGITRPLTYPVRQNGKCMAKMILSVWLLSASITLPPLFGWAQNVNDDKVCLISQDFGYTIYSTAVAFYIPMSVMLFMYYQIYKAARKSAAKHKFSGFPRVQPESVISLNGVVKLQKEVEECANLSRLLKHERKNISIFKREQKAATTLGIIVGAFTVCWLPFFLLSTARPFICGTSCSCIPLWVERTCLWLGYANSLINPFIYAFFNRDLRTTYRSLLQCQYRNINRKLSAAGMHEALKLAERPERSEFVLQNCDHCGKKGHDT.

The Extracellular portion of the chain corresponds to M1 to V86. N-linked (GlcNAc...) asparagine glycans are attached at residues N5 and N69. A helical membrane pass occupies residues I87–F111. Over V112–Y121 the chain is Cytoplasmic. A helical transmembrane segment spans residues L122–V143. The Extracellular portion of the chain corresponds to T144–H155. Residues F156–I181 form a helical membrane-spanning segment. C158 and C234 form a disulfide bridge. Residue D165 coordinates serotonin. Residues D182–C201 are Cytoplasmic-facing. Residues M202–F222 form a helical membrane-spanning segment. The Extracellular portion of the chain corresponds to G223–F240. The chain crosses the membrane as a helical span at residues G241–Y263. Over Q264–A329 the chain is Cytoplasmic. Residues T330–F355 traverse the membrane as a helical segment. At I356–L366 the chain is on the extracellular side. A helical transmembrane segment spans residues W367 to F390. Residues N391 to T448 are Cytoplasmic-facing. C404 carries the S-palmitoyl cysteine lipid modification.

This sequence belongs to the G-protein coupled receptor 1 family.

It is found in the cell membrane. In terms of biological role, G-protein coupled receptor for 5-hydroxytryptamine (serotonin), a biogenic hormone that functions as a neurotransmitter, a hormone and a mitogen. Ligand binding causes a conformation change that triggers signaling via guanine nucleotide-binding proteins (G proteins) and modulates the activity of downstream effectors. HTR7 is coupled to G(s) G alpha proteins and mediates activation of adenylate cyclase activity. This chain is 5-hydroxytryptamine receptor 7 (Htr7), found in Mus musculus (Mouse).